The primary structure comprises 267 residues: Interleukin-15 receptor subunit alpha (267 aa).

The N-terminal stretch at 1 to 30 (MAPRRARGCRTLGLPALLLLLLLRPPATRG) is a signal peptide. One can recognise a Sushi domain in the interval 31-95 (ITCPPPMSVE…WTTPSLKCIR (65 aa)). The Extracellular portion of the chain corresponds to 31-205 (ITCPPPMSVE…VYPQGHSDTT (175 aa)). 2 cysteine pairs are disulfide-bonded: Cys-33-Cys-75 and Cys-59-Cys-93. The tract at residues 102-178 (QRPAPPSTVT…ESSHGTPSQT (77 aa)) is disordered. The segment covering 108–124 (STVTTAGVTPQPESLSP) has biased composition (polar residues). A compositionally biased stretch (low complexity) spans 129–145 (PAASSPSSNNTAATTAA). Asn-137 carries an N-linked (GlcNAc...) asparagine glycan. The segment covering 152–165 (LMPSKSPSTGTTEI) has biased composition (polar residues). Residues 206 to 228 (VAISTSTVLLCGLSAVSLLACYL) form a helical membrane-spanning segment. At 229–267 (KSRQTPPLASVEMEAMEALPVTWGTSSRDEDLENCSHHL) the chain is on the cytoplasmic side.

In terms of assembly, the interleukin-15 receptor IL15R is a heterotrimer of IL15RA, IL2RB and IL2RG. IL15RA also self-associates. Interacts with SYK. N-glycosylated and O-glycosylated. Post-translationally, a soluble form (sIL-15RA) arises from proteolytic shedding of the membrane-anchored receptor. It also binds IL-15 and thus interferes with IL-15 binding to the membrane receptor. In terms of tissue distribution, expressed in neutrophils (at protein level). Expressed in fetal brain with higher expression in the hippocampus and cerebellum than in cortex and thalamus. Higher levels of soluble sIL-15RA form in comparison with membrane-bound forms is present in all brain structures. Isoforms 1, 3, 4, 5, 6, 7, 8 and 9: Widely expressed.

Its subcellular location is the membrane. The protein resides in the nucleus membrane. It is found in the cell surface. The protein localises to the endoplasmic reticulum membrane. It localises to the golgi apparatus membrane. Its subcellular location is the cytoplasmic vesicle membrane. The protein resides in the secreted. It is found in the extracellular space. Functionally, high-affinity receptor for interleukin-15. Can signal both in cis and trans where IL15R from one subset of cells presents IL15 to neighboring IL2RG-expressing cells. In neutrophils, binds and activates kinase SYK in response to IL15 stimulation. In neutrophils, required for IL15-induced phagocytosis in a SYK-dependent manner. Expression of different isoforms may alter or interfere with signal transduction. Does not bind IL15. This is Interleukin-15 receptor subunit alpha (IL15RA) from Homo sapiens (Human).